Consider the following 252-residue polypeptide: 3-dehydroquinate dehydratase (252 aa).

Residues serine 21, 46 to 48 (EWR), and arginine 82 each bind 3-dehydroquinate. Histidine 143 acts as the Proton donor/acceptor in catalysis. Lysine 170 acts as the Schiff-base intermediate with substrate in catalysis. Positions 213, 232, and 236 each coordinate 3-dehydroquinate.

The protein belongs to the type-I 3-dehydroquinase family. Homodimer.

It catalyses the reaction 3-dehydroquinate = 3-dehydroshikimate + H2O. Its pathway is metabolic intermediate biosynthesis; chorismate biosynthesis; chorismate from D-erythrose 4-phosphate and phosphoenolpyruvate: step 3/7. Functionally, involved in the third step of the chorismate pathway, which leads to the biosynthesis of aromatic amino acids. Catalyzes the cis-dehydration of 3-dehydroquinate (DHQ) and introduces the first double bond of the aromatic ring to yield 3-dehydroshikimate. In Shigella flexneri serotype 5b (strain 8401), this protein is 3-dehydroquinate dehydratase.